Reading from the N-terminus, the 358-residue chain is Phosphoserine aminotransferase (358 aa).

L-glutamate is bound at residue Arg-41. Pyridoxal 5'-phosphate contacts are provided by residues 75 to 76 (AS), Trp-100, Thr-148, Asp-167, and Gln-190. Position 191 is an N6-(pyridoxal phosphate)lysine (Lys-191). Residue 233-234 (NT) participates in pyridoxal 5'-phosphate binding.

This sequence belongs to the class-V pyridoxal-phosphate-dependent aminotransferase family. SerC subfamily. Homodimer. It depends on pyridoxal 5'-phosphate as a cofactor.

Its subcellular location is the cytoplasm. It carries out the reaction O-phospho-L-serine + 2-oxoglutarate = 3-phosphooxypyruvate + L-glutamate. It catalyses the reaction 4-(phosphooxy)-L-threonine + 2-oxoglutarate = (R)-3-hydroxy-2-oxo-4-phosphooxybutanoate + L-glutamate. The protein operates within amino-acid biosynthesis; L-serine biosynthesis; L-serine from 3-phospho-D-glycerate: step 2/3. Its pathway is cofactor biosynthesis; pyridoxine 5'-phosphate biosynthesis; pyridoxine 5'-phosphate from D-erythrose 4-phosphate: step 3/5. Catalyzes the reversible conversion of 3-phosphohydroxypyruvate to phosphoserine and of 3-hydroxy-2-oxo-4-phosphonooxybutanoate to phosphohydroxythreonine. This chain is Phosphoserine aminotransferase, found in Campylobacter lari (strain RM2100 / D67 / ATCC BAA-1060).